The primary structure comprises 156 residues: ATP synthase subunit b (156 aa).

Residues 12 to 32 (LAFAIFVWFCMKLVWPPITAA) form a helical membrane-spanning segment.

This sequence belongs to the ATPase B chain family. F-type ATPases have 2 components, F(1) - the catalytic core - and F(0) - the membrane proton channel. F(1) has five subunits: alpha(3), beta(3), gamma(1), delta(1), epsilon(1). F(0) has three main subunits: a(1), b(2) and c(10-14). The alpha and beta chains form an alternating ring which encloses part of the gamma chain. F(1) is attached to F(0) by a central stalk formed by the gamma and epsilon chains, while a peripheral stalk is formed by the delta and b chains.

Its subcellular location is the cell inner membrane. In terms of biological role, f(1)F(0) ATP synthase produces ATP from ADP in the presence of a proton or sodium gradient. F-type ATPases consist of two structural domains, F(1) containing the extramembraneous catalytic core and F(0) containing the membrane proton channel, linked together by a central stalk and a peripheral stalk. During catalysis, ATP synthesis in the catalytic domain of F(1) is coupled via a rotary mechanism of the central stalk subunits to proton translocation. Component of the F(0) channel, it forms part of the peripheral stalk, linking F(1) to F(0). This is ATP synthase subunit b from Stutzerimonas stutzeri (strain A1501) (Pseudomonas stutzeri).